Consider the following 304-residue polypeptide: D-tagatose-1-phosphate kinase (304 aa).

The active-site Proton acceptor is aspartate 250.

Belongs to the carbohydrate kinase PfkB family. It depends on Mg(2+) as a cofactor.

It catalyses the reaction alpha-D-tagatopyranose 1-phosphate + ATP = D-tagatofuranose 1,6-bisphosphate + ADP + H(+). Its pathway is carbohydrate degradation. With respect to regulation, activity is inhibited by tagatose-6-phosphate and fructose-6-phosphate. In terms of biological role, kinase involved in a D-tagatose catabolic pathway. Catalyzes the phosphorylation of D-tagatose-1-phosphate (Tag-1P) to D-tagatose-1,6-bisphosphate. Can also use D-fructose-1-phosphate, with 40-fold lower catalytic efficiency, but not tagatose-6-phosphate or fructose-6-phosphate. The substrate, which occurs in a pyranose form in solution, may undergo a change to the furanose conformation after binding to the enzyme, in order to permit phosphorylation at C-6. In Bacillus licheniformis (strain ATCC 14580 / DSM 13 / JCM 2505 / CCUG 7422 / NBRC 12200 / NCIMB 9375 / NCTC 10341 / NRRL NRS-1264 / Gibson 46), this protein is D-tagatose-1-phosphate kinase.